The following is a 348-amino-acid chain: D-alanine--D-alanine ligase (348 aa).

An ATP-grasp domain is found at 132–334 (KRILEVAGVP…YSDIIKELVV (203 aa)). 162–217 (LEKLTFPVFVKPANMGSSVGISKAENESELRSAIDLALKYDSRILIEQGVVAREIE) is a binding site for ATP. Residues Asp-288, Glu-301, and Asn-303 each coordinate Mg(2+).

The protein belongs to the D-alanine--D-alanine ligase family. Requires Mg(2+) as cofactor. Mn(2+) serves as cofactor.

It is found in the cytoplasm. The catalysed reaction is 2 D-alanine + ATP = D-alanyl-D-alanine + ADP + phosphate + H(+). It functions in the pathway cell wall biogenesis; peptidoglycan biosynthesis. Cell wall formation. This chain is D-alanine--D-alanine ligase, found in Streptococcus thermophilus (strain CNRZ 1066).